Here is a 674-residue protein sequence, read N- to C-terminus: Electrogenic aspartate/glutamate antiporter SLC25A13, mitochondrial (674 aa).

At A2 the chain carries N-acetylalanine. A regulatory N-terminal domain region spans residues 2-295; it reads AAAKVALTKR…TLADIERIAP (294 aa). The Mitochondrial intermembrane segment spans residues 2 to 331; that stretch reads AAAKVALTKR…LLQVAESAYR (330 aa). EF-hand domains follow at residues 51-86, 87-122, 123-157, and 158-193; these read SQPN…SVLC, APDA…TTIH, QHIP…FLLE, and IQLE…IRPH. 5 residues coordinate Ca(2+): D66, T68, D70, L72, and E77. The tract at residues 296–311 is linker loop domain; the sequence is LEEGTLPFNLAEAQRQ. A carrier domain region spans residues 321–611; the sequence is VLLQVAESAY…LQRWFYIDFG (291 aa). Solcar repeat units follow at residues 326-418, 426-510, and 518-605; these read AESA…VRDK, VPLA…ARAS, and VSPG…LQRW. The chain crosses the membrane as a helical span at residues 332–349; the sequence is FGLGSVAGAVGATAVYPI. The Mitochondrial matrix segment spans residues 350–392; that stretch reads DLVKTRMQNQRSTGSFVGELMYKNSFDCFKKVLRYEGFFGLYR. N6-acetyllysine occurs at positions 353 and 372. A helical membrane pass occupies residues 393 to 412; that stretch reads GLLPQLLGVAPEKAIKLTVN. The Mitochondrial intermembrane portion of the chain corresponds to 413 to 435; that stretch reads DFVRDKFMHKDGSVPLAAEILAG. Residues 436–449 form a helical membrane-spanning segment; the sequence is GCAGGSQVIFTNPL. Residues 450–484 are Mitochondrial matrix-facing; sequence EIVKIRLQVAGEITTGPRVSALSVVRDLGFFGIYK. K453 is modified (N6-methyllysine). K484 carries the post-translational modification N6-acetyllysine; alternate. At K484 the chain carries N6-succinyllysine; alternate. The helical transmembrane segment at 485-504 threads the bilayer; sequence GAKACFLRDIPFSAIYFPCY. Over 505–523 the chain is Mitochondrial intermembrane; that stretch reads AHARASFANEDGQVSPGSL. Residues 524–541 traverse the membrane as a helical segment; that stretch reads LLAGAIAGMPAASLVTPA. The Mitochondrial matrix portion of the chain corresponds to 542-580; sequence DVIKTRLQVAARAGQTTYSGVIDCFKKILREEGPKALWK. The residue at position 580 (K580) is an N6-succinyllysine. A helical transmembrane segment spans residues 581-599; the sequence is GAARVFRSSPQFGVTLLTY. At 600-674 the chain is on the mitochondrial intermembrane side; it reads ELLQRWFYID…PTSEAIGGGP (75 aa). The segment at 612–674 is C-terminal domain; the sequence is GVKPMGSEPV…PTSEAIGGGP (63 aa). K661 bears the N6-acetyllysine mark.

The protein belongs to the mitochondrial carrier (TC 2.A.29) family. Homodimer (via N-terminus).

It localises to the mitochondrion inner membrane. The catalysed reaction is L-aspartate(in) + L-glutamate(out) + H(+)(out) = L-aspartate(out) + L-glutamate(in) + H(+)(in). It catalyses the reaction 3-sulfino-L-alanine(out) + L-glutamate(in) + H(+)(in) = 3-sulfino-L-alanine(in) + L-glutamate(out) + H(+)(out). It carries out the reaction 3-sulfino-L-alanine(out) + L-aspartate(in) = 3-sulfino-L-alanine(in) + L-aspartate(out). Its function is as follows. Mitochondrial electrogenic aspartate/glutamate antiporter that favors efflux of aspartate and entry of glutamate and proton within the mitochondria as part of the malate-aspartate shuttle. Also mediates the uptake of L-cysteinesulfinate (3-sulfino-L-alanine) by mitochondria in exchange of L-glutamate and proton. Can also exchange L-cysteinesulfinate with aspartate in their anionic form without any proton translocation. Lacks transport activity towards gamma-aminobutyric acid (GABA). This is Electrogenic aspartate/glutamate antiporter SLC25A13, mitochondrial from Macaca fascicularis (Crab-eating macaque).